A 124-amino-acid chain; its full sequence is Small ribosomal subunit protein uS12 (124 aa).

3-methylthioaspartic acid is present on Asp-89.

This sequence belongs to the universal ribosomal protein uS12 family. As to quaternary structure, part of the 30S ribosomal subunit. Contacts proteins S8 and S17. May interact with IF1 in the 30S initiation complex.

With S4 and S5 plays an important role in translational accuracy. Its function is as follows. Interacts with and stabilizes bases of the 16S rRNA that are involved in tRNA selection in the A site and with the mRNA backbone. Located at the interface of the 30S and 50S subunits, it traverses the body of the 30S subunit contacting proteins on the other side and probably holding the rRNA structure together. The combined cluster of proteins S8, S12 and S17 appears to hold together the shoulder and platform of the 30S subunit. This chain is Small ribosomal subunit protein uS12, found in Tolumonas auensis (strain DSM 9187 / NBRC 110442 / TA 4).